Here is a 103-residue protein sequence, read N- to C-terminus: Large ribosomal subunit protein bL21 (103 aa).

Belongs to the bacterial ribosomal protein bL21 family. Part of the 50S ribosomal subunit. Contacts protein L20.

Its function is as follows. This protein binds to 23S rRNA in the presence of protein L20. The polypeptide is Large ribosomal subunit protein bL21 (Erwinia tasmaniensis (strain DSM 17950 / CFBP 7177 / CIP 109463 / NCPPB 4357 / Et1/99)).